A 368-amino-acid polypeptide reads, in one-letter code: 2-aminoethylphosphonate--pyruvate transaminase (368 aa).

Lys-192 carries the post-translational modification N6-(pyridoxal phosphate)lysine.

It belongs to the class-V pyridoxal-phosphate-dependent aminotransferase family. PhnW subfamily. As to quaternary structure, homodimer. Pyridoxal 5'-phosphate serves as cofactor.

It catalyses the reaction (2-aminoethyl)phosphonate + pyruvate = phosphonoacetaldehyde + L-alanine. Involved in phosphonate degradation. This is 2-aminoethylphosphonate--pyruvate transaminase from Pseudomonas putida (strain W619).